Here is a 347-residue protein sequence, read N- to C-terminus: MAIDEDKQKAISLAIKQIDKVFGKGALVRLGDKQVEKIDAISTGSLGLDLALGIGGVPKGRIIEIYGPESSGKTTLSLHIIAECQKNGGVCAFIDAEHALDVHYAKRLGVDTENLLVSQPDTGEQALEILETITRSGGIDLVVVDSVAALTPKAEIDGDMGDQHVGLQARLMSHALRKITGVLHKMNTTLIFINQIRMKIGMMGYGSPETTTGGNALKFYASVRIDIRRIAALKQNEQHIGNRAKAKVVKNKVAPPFREAEFDIMFGEGISKEGEIIDYGVKLDIVDKSGAWLSYQDKKLGQGRENAKALLKEDKALADEITLKIKESIGSNEEIMPLPDEPLEEME.

An ATP-binding site is contributed by 67-74; that stretch reads GPESSGKT.

This sequence belongs to the RecA family.

The protein resides in the cytoplasm. Functionally, can catalyze the hydrolysis of ATP in the presence of single-stranded DNA, the ATP-dependent uptake of single-stranded DNA by duplex DNA, and the ATP-dependent hybridization of homologous single-stranded DNAs. It interacts with LexA causing its activation and leading to its autocatalytic cleavage. This Helicobacter pylori (strain HPAG1) protein is Protein RecA.